A 744-amino-acid polypeptide reads, in one-letter code: Potassium-transporting ATPase ATP-binding subunit (744 aa).

4 helical membrane passes run 80–100 (PVMFVVYIGSILTTLLWVMAL), 108–128 (AGFILAVSVWLWFTVLFANVA), 265–285 (LALTILLVSLTIILLLATVTL), and 310–330 (VLVALLVCLIPTTIGGLLSAI). Catalysis depends on D363, which acts as the 4-aspartylphosphate intermediate. ATP-binding positions include D400, E404, 435-442 (FSAQTRMS), and K457. D580 and D584 together coordinate Mg(2+). Transmembrane regions (helical) follow at residues 650–670 (FAIIPAAFATTYPQLAALNVM), 678–698 (AVMSAVIFNALIIVFLIPLAL), and 724–744 (LLLPFPGIKLIDMFLAAMGWV).

This sequence belongs to the cation transport ATPase (P-type) (TC 3.A.3) family. Type IA subfamily. In terms of assembly, the system is composed of three essential subunits: KdpA, KdpB and KdpC.

The protein resides in the cell inner membrane. The catalysed reaction is K(+)(out) + ATP + H2O = K(+)(in) + ADP + phosphate + H(+). In terms of biological role, part of the high-affinity ATP-driven potassium transport (or Kdp) system, which catalyzes the hydrolysis of ATP coupled with the electrogenic transport of potassium into the cytoplasm. This subunit is responsible for energy coupling to the transport system and for the release of the potassium ions to the cytoplasm. The polypeptide is Potassium-transporting ATPase ATP-binding subunit (Ralstonia nicotianae (strain ATCC BAA-1114 / GMI1000) (Ralstonia solanacearum)).